We begin with the raw amino-acid sequence, 118 residues long: Hisactophilin-2 (118 aa).

Residue G2 is the site of N-myristoyl glycine attachment. Residues 8–109 (AHNGHYLSAE…HVSTSHHHDH (102 aa)) are contains several HHXH repeats. A run of 2 repeats spans residues 34–46 (FHIE…VALR) and 74–86 (FHLE…VSIK). The segment at 34 to 86 (FHIENHGSKVALRTHCGKYVSIGDHKQVYLSHHLHGDHSLFHLEHHHGKVSIK) is 2 X 13 AA approximate repeats. The disordered stretch occupies residues 99–118 (GHVSTSHHHDHHATFEEHIL).

The protein belongs to the hisactophilin family. Homodimer or heterodimer of hatA and hatB, linked by a disulfide bond. Post-translationally, phosphorylated.

It is found in the cytoplasm. It localises to the cell membrane. In terms of biological role, may act as an intracellular pH sensor that links chemotactic signals to responses in the microfilament system of the cells by nucleating actin polymerization or stabilizing the filaments. The chain is Hisactophilin-2 (hatB) from Dictyostelium discoideum (Social amoeba).